Here is a 141-residue protein sequence, read N- to C-terminus: Putative ankyrin repeat protein FPV223 (141 aa).

4 ANK repeats span residues 21–50, 54–83, 85–114, and 118–140; these read SGRTSLHYAVLFNHKRALSFLLARGADVFK, CMCTPLYYAMLSDQRDMVTMLLHSKKYIVK, RNKLDLHNAIETGNIKVIKTLLDNGVNENS, and DGLTPLHYAVKYGNISIVKMFVI.

The protein is Putative ankyrin repeat protein FPV223 of Vertebrata (FPV).